The sequence spans 396 residues: Elongation factor Tu (396 aa).

A tr-type G domain is found at 10–206; that stretch reads KPHCNIGTIG…NVDEYIPQPE (197 aa). The G1 stretch occupies residues 19–26; sequence GHVDHGKT. A GTP-binding site is contributed by 19-26; the sequence is GHVDHGKT. Threonine 26 contributes to the Mg(2+) binding site. The G2 stretch occupies residues 60–64; that stretch reads GITIS. The segment at 81–84 is G3; the sequence is DCPG. GTP-binding positions include 81–85 and 136–139; these read DCPGH and NKCD. The tract at residues 136-139 is G4; that stretch reads NKCD. The interval 174–176 is G5; that stretch reads SAL.

Belongs to the TRAFAC class translation factor GTPase superfamily. Classic translation factor GTPase family. EF-Tu/EF-1A subfamily. In terms of assembly, monomer.

The protein resides in the cytoplasm. The enzyme catalyses GTP + H2O = GDP + phosphate + H(+). GTP hydrolase that promotes the GTP-dependent binding of aminoacyl-tRNA to the A-site of ribosomes during protein biosynthesis. The polypeptide is Elongation factor Tu (Bradyrhizobium diazoefficiens (strain JCM 10833 / BCRC 13528 / IAM 13628 / NBRC 14792 / USDA 110)).